Reading from the N-terminus, the 389-residue chain is ATP phosphoribosyltransferase regulatory subunit (389 aa).

This sequence belongs to the class-II aminoacyl-tRNA synthetase family. HisZ subfamily. As to quaternary structure, heteromultimer composed of HisG and HisZ subunits.

The protein resides in the cytoplasm. The protein operates within amino-acid biosynthesis; L-histidine biosynthesis; L-histidine from 5-phospho-alpha-D-ribose 1-diphosphate: step 1/9. In terms of biological role, required for the first step of histidine biosynthesis. May allow the feedback regulation of ATP phosphoribosyltransferase activity by histidine. The sequence is that of ATP phosphoribosyltransferase regulatory subunit from Hydrogenovibrio crunogenus (strain DSM 25203 / XCL-2) (Thiomicrospira crunogena).